A 513-amino-acid chain; its full sequence is Cytochrome P450 86A1 (513 aa).

The helical transmembrane segment at 7–27 threads the bilayer; that stretch reads ILTGYAVAALSVYALWFYFLS. Cys-456 is a binding site for heme.

The protein belongs to the cytochrome P450 family. Requires heme as cofactor. In terms of tissue distribution, expressed in roots.

Its subcellular location is the membrane. The enzyme catalyses an omega-methyl-long-chain fatty acid + reduced [NADPH--hemoprotein reductase] + O2 = an omega-hydroxy-long-chain fatty acid + oxidized [NADPH--hemoprotein reductase] + H2O + H(+). Catalyzes the omega-hydroxylation of various fatty acids (FA). Acts on saturated and unsaturated fatty acids with chain lengths from C12 to C18 but not on hexadecane. In Arabidopsis thaliana (Mouse-ear cress), this protein is Cytochrome P450 86A1 (CYP86A1).